The sequence spans 290 residues: Acetylglutamate kinase (290 aa).

Substrate-binding positions include 64-65, R86, and N183; that span reads GG.

The protein belongs to the acetylglutamate kinase family. ArgB subfamily.

It is found in the cytoplasm. It catalyses the reaction N-acetyl-L-glutamate + ATP = N-acetyl-L-glutamyl 5-phosphate + ADP. It functions in the pathway amino-acid biosynthesis; L-arginine biosynthesis; N(2)-acetyl-L-ornithine from L-glutamate: step 2/4. Its function is as follows. Catalyzes the ATP-dependent phosphorylation of N-acetyl-L-glutamate. This chain is Acetylglutamate kinase, found in Halothermothrix orenii (strain H 168 / OCM 544 / DSM 9562).